A 457-amino-acid chain; its full sequence is Autophagy-related protein 14 (457 aa).

A coiled-coil region spans residues 31-109 (RIENVMALIE…TRRAALSRRK (79 aa)). 3 disordered regions span residues 54-73 (ETNA…QRTA), 252-274 (PSQA…VSRP), and 433-457 (NKNL…VKNR). Positions 253–266 (SQASVSSPSSTTDT) are enriched in low complexity.

The protein belongs to the ATG14 family. Component of the autophagy-specific VPS34 PI3-kinase complex I.

Its subcellular location is the preautophagosomal structure membrane. It is found in the vacuole membrane. Its function is as follows. Required for cytoplasm to vacuole transport (Cvt) and autophagy as a part of the autophagy-specific VPS34 PI3-kinase complex I. This complex is essential to recruit the ATG8-phosphatidylinositol conjugate and the ATG12-ATG5 conjugate to the pre-autophagosomal structure. ATG14 mediates the specific binding of the VPS34 PI3-kinase complex I to the preautophagosomal structure (PAS). Autophagy is required for proper vegetative growth, asexual/sexual reproduction, and full virulence. Autophagy is particularly involved in the biosynthesis of deoxynivalenol (DON), an important virulence determinant. The polypeptide is Autophagy-related protein 14 (Gibberella zeae (strain ATCC MYA-4620 / CBS 123657 / FGSC 9075 / NRRL 31084 / PH-1) (Wheat head blight fungus)).